The primary structure comprises 388 residues: Trans-enoyl reductase tenC (388 aa).

NADP(+) is bound at residue 51–54; it reads VDGK. 142 to 149 is a binding site for substrate; it reads VGVASVGM. NADP(+)-binding positions include 219 to 222, Tyr-237, and 284 to 285; these read SSES and LD. 304–308 lines the substrate pocket; that stretch reads SFTQF. Residue 373–374 participates in NADP(+) binding; the sequence is IK.

Belongs to the zinc-containing alcohol dehydrogenase family. Monomer.

It participates in secondary metabolite biosynthesis. In terms of biological role, trans-enoyl reductase; part of the gene cluster that mediates the biosynthesis of tenellin-type 2-pyridones, iron-chelating compounds involved in iron stress tolerance, competition with the natural competitor fungus Metarhizium robertsii and insect hosts infection. TenC collaborates with the hybrid PKS-NRPS synthetase tenS to catalyze the assembly of the polyketide-amino acid backbone, since tenS lacks a designated enoylreductase (ER) domain. Upon formation of the polyketide backbone on the thiotemplate of tenS, the triketide is transferred to the NRPS module and linked to tyrosine to produce the pyrrolidine-2-dione intermediates, including pretellinin A, 11-hydropretellenin A, 12-hydropretellenin A, 13-hydropretellenin A, 14-hydropretellenin A, 12-oxopretellenin A and prototellinin D. The pathway begins with the assembly of the polyketide-amino acid backbone by the hybrid PKS-NRPS tenS with the help of the enoyl reductase tenC. These enzymes catalyze the synthesis of the pyrrolidine-2-dione intermediates pretellinin A, 11-hydropretellenin A, 12-hydropretellenin A, 13-hydropretellenin A, 14-hydropretellenin A, 12-oxopretellenin A and prototellinin D. The cytochrome P450 monooxygenase tenA then catalyzes an oxidative ring expansion of pretenellin A and 14-hydropretellenin A to form the 2-pyridone core, leading to pretenellin B and pyridovericin, respectively. The cytochrome P450 monooxygenase tenB is then required for the selective N-hydroxylation of the 2-pyridone nitrogen of yield tellinin and 15-hydroxytellenin (15-HT), respectively. The UDP-glucosyltransferase GT1 and the methyltransferase MT1, located outside the tenS gene cluster, contribute to the stepwise glycosylation and methylation of 15-HT to obtain the glycoside pyridovericin-N-O-(4-O-methyl-beta-D-glucopyranoside) (PMGP). Additional related compounds such as 1-O-methyl-15-HT, (8Z)-1-O-methyl-15-HT, and O-methyltenellin A are also produced but the enzymes involved in their biosynthesis have still to be determined. This Beauveria bassiana (White muscardine disease fungus) protein is Trans-enoyl reductase tenC.